The following is a 437-amino-acid chain: Epsilon-sarcoglycan (437 aa).

At 1–317 the chain is on the extracellular side; the sequence is MQLPRWWELG…LKSRDYYTDF (317 aa). Asn-200 carries N-linked (GlcNAc...) asparagine glycosylation. The helical transmembrane segment at 318-338 threads the bilayer; the sequence is LITLAVPSAVALVLFLILAYI. The Cytoplasmic portion of the chain corresponds to 339 to 437; sequence MCCRREGVEK…QQQTTGKWYP (99 aa).

It belongs to the sarcoglycan alpha/epsilon family. In terms of processing, N-glycosylated. Ubiquitinated, leading to its degradation by the proteasome.

The protein resides in the cell membrane. The protein localises to the sarcolemma. It localises to the cytoplasm. Its subcellular location is the cytoskeleton. It is found in the cell projection. The protein resides in the dendrite. The protein localises to the golgi apparatus. Its function is as follows. Component of the sarcoglycan complex, a subcomplex of the dystrophin-glycoprotein complex which forms a link between the F-actin cytoskeleton and the extracellular matrix. The polypeptide is Epsilon-sarcoglycan (Macaca fascicularis (Crab-eating macaque)).